Consider the following 129-residue polypeptide: UPF0212 protein MM_2357 (129 aa).

The protein belongs to the UPF0212 family.

The chain is UPF0212 protein MM_2357 from Methanosarcina mazei (strain ATCC BAA-159 / DSM 3647 / Goe1 / Go1 / JCM 11833 / OCM 88) (Methanosarcina frisia).